Here is a 369-residue protein sequence, read N- to C-terminus: Protein pxr-1 (369 aa).

Residues 1–23 (MGLAAAKNKRKLGTDPNNTKWSR) form a disordered region. Residues 25-79 (ETTFGQKILRAQGWQPGEFLGAKDAAHAVHHTEASSSHIKVTLKDDNLGLGAKRN) enclose the G-patch domain. The tract at residues 147–338 (EEDGVPQSDT…GTSTPTVTSS (192 aa)) is disordered. Residues 153–167 (QSDTVDQQVETVPSQ) show a composition bias toward polar residues. Residues 218 to 227 (SKKKEKKDKK) are compositionally biased toward basic residues. The span at 228-237 (EKKDQKEKKD) shows a compositional bias: basic and acidic residues. Basic residues predominate over residues 267-292 (KSKKDKKKEKKEKKDKKKDKKEKKRK). Positions 304-318 (EDSKSKAQKRTKDGA) are enriched in basic and acidic residues. The segment covering 322–338 (TSTPGGSGTSTPTVTSS) has biased composition (low complexity).

It belongs to the PINX1 family.

It is found in the nucleus. The protein resides in the nucleolus. Its function is as follows. Involved in rRNA-processing at A0, A1 and A2 sites and negatively regulates telomerase. The polypeptide is Protein pxr-1 (pxr-1) (Neurospora crassa (strain ATCC 24698 / 74-OR23-1A / CBS 708.71 / DSM 1257 / FGSC 987)).